The chain runs to 432 residues: uncharacterized protein (432 aa).

Residues 1–14 (MSDTTDVPENQKSP) are compositionally biased toward polar residues. The interval 1-42 (MSDTTDVPENQKSPKPSGKADKRKIEEKPENSSLKRKKFEDP) is disordered. The segment covering 18-30 (GKADKRKIEEKPE) has biased composition (basic and acidic residues). The region spanning 85-148 (RKMVEVFSGE…HEHPIRDLPI (64 aa)) is the S4 RNA-binding domain. The active site involves aspartate 199.

It belongs to the pseudouridine synthase RluA family.

This is an uncharacterized protein from Caenorhabditis elegans.